The chain runs to 416 residues: Tyrosine--tRNA ligase (416 aa).

Residue Tyr-40 coordinates L-tyrosine. The short motif at 45-54 (ATAASLHVGH) is the 'HIGH' region element. Residues Tyr-177 and Gln-181 each contribute to the L-tyrosine site. The short motif at 237-241 (KMGKS) is the 'KMSKS' region element. ATP is bound at residue Lys-240. An S4 RNA-binding domain is found at 351-416 (LSVAHFLVAA…RKKHKLVRLS (66 aa)).

Belongs to the class-I aminoacyl-tRNA synthetase family. TyrS type 1 subfamily. Homodimer.

Its subcellular location is the cytoplasm. It catalyses the reaction tRNA(Tyr) + L-tyrosine + ATP = L-tyrosyl-tRNA(Tyr) + AMP + diphosphate + H(+). In terms of biological role, catalyzes the attachment of tyrosine to tRNA(Tyr) in a two-step reaction: tyrosine is first activated by ATP to form Tyr-AMP and then transferred to the acceptor end of tRNA(Tyr). In Cereibacter sphaeroides (strain ATCC 17029 / ATH 2.4.9) (Rhodobacter sphaeroides), this protein is Tyrosine--tRNA ligase.